A 438-amino-acid chain; its full sequence is Cobyrinate a,c-diamide synthase (438 aa).

The 185-residue stretch at 242 to 426 (TIAIARDAAF…FHAYFSSCPA (185 aa)) folds into the GATase cobBQ-type domain. The active-site Nucleophile is Cys-325.

Belongs to the CobB/CbiA family. The cofactor is Mg(2+).

The catalysed reaction is cob(II)yrinate + 2 L-glutamine + 2 ATP + 2 H2O = cob(II)yrinate a,c diamide + 2 L-glutamate + 2 ADP + 2 phosphate + 2 H(+). Its pathway is cofactor biosynthesis; adenosylcobalamin biosynthesis; cob(II)yrinate a,c-diamide from sirohydrochlorin (anaerobic route): step 10/10. Its function is as follows. Catalyzes the ATP-dependent amidation of the two carboxylate groups at positions a and c of cobyrinate, using either L-glutamine or ammonia as the nitrogen source. This is Cobyrinate a,c-diamide synthase from Herminiimonas arsenicoxydans.